We begin with the raw amino-acid sequence, 227 residues long: PKHD-type hydroxylase Bpro_3048 (227 aa).

Positions 78-179 constitute a Fe2OG dioxygenase domain; the sequence is KIFTPRINRY…RLACFFWVES (102 aa). His97, Asp99, and His160 together coordinate Fe cation. Residue Arg170 participates in 2-oxoglutarate binding.

The cofactor is Fe(2+). It depends on L-ascorbate as a cofactor.

In Polaromonas sp. (strain JS666 / ATCC BAA-500), this protein is PKHD-type hydroxylase Bpro_3048.